The chain runs to 518 residues: Sensory neuron membrane protein 1 (518 aa).

Topologically, residues 1-8 (MKTAEKLG) are cytoplasmic. The helical transmembrane segment at 9–29 (IIGTTISIFGIGFGWGVFPWL) threads the bilayer. At 30–456 (IRMQIGRVSL…ELFRILQFLD (427 aa)) the chain is on the extracellular side. 6 N-linked (GlcNAc...) asparagine glycosylation sites follow: Asn-64, Asn-186, Asn-225, Asn-316, Asn-334, and Asn-381. Disulfide bonds link Cys-265-Cys-330, Cys-294-Cys-349, and Cys-332-Cys-338. Residues 457-477 (VIKWVITLFGAGVVSGGVGLY) traverse the membrane as a helical segment. The Cytoplasmic segment spans residues 478-518 (YKEKNSLPITPTSSATSKKIDNPTDKTTTHELGHTNFGYIN).

This sequence belongs to the CD36 family.

It localises to the cell membrane. In terms of biological role, plays an olfactory role that is not restricted to pheromone sensitivity. This chain is Sensory neuron membrane protein 1, found in Pediculus humanus subsp. corporis (Body louse).